The primary structure comprises 235 residues: Large ribosomal subunit protein uL1 (235 aa).

This sequence belongs to the universal ribosomal protein uL1 family. Part of the 50S ribosomal subunit.

Its function is as follows. Binds directly to 23S rRNA. The L1 stalk is quite mobile in the ribosome, and is involved in E site tRNA release. Protein L1 is also a translational repressor protein, it controls the translation of the L11 operon by binding to its mRNA. The protein is Large ribosomal subunit protein uL1 of Halothermothrix orenii (strain H 168 / OCM 544 / DSM 9562).